The following is a 201-amino-acid chain: MPFKPLVTAGIEGLLNTFLYRSPALKSARTRLQGKVLCVKLKGFSMPLVLVFSERQVDVLGAWEGEADCTVITQASVLPKLRDRQQLATLIRSGELEVQGDIQVVQNFVALADLAEFDPAELLAPYTGDIAAESIGKVVRGGAKFLRHGFQRQQRYAAEAITEEWRMAPGPLEVAWFAEETAAVERAVDSLTTRLEKLEAK.

The region spanning 15–112 is the SCP2 domain; that stretch reads LNTFLYRSPA…QVVQNFVALA (98 aa).

It belongs to the UbiJ family.

It is found in the cytoplasm. It functions in the pathway cofactor biosynthesis; ubiquinone biosynthesis. Functionally, required for ubiquinone (coenzyme Q) biosynthesis under aerobic conditions. Binds hydrophobic ubiquinone biosynthetic intermediates via its SCP2 domain and is essential for the stability of the Ubi complex. May constitute a docking platform where Ubi enzymes assemble and access their SCP2-bound polyprenyl substrates. Required for intracellular proliferation in macrophages. The chain is Ubiquinone biosynthesis accessory factor UbiJ from Salmonella typhimurium (strain LT2 / SGSC1412 / ATCC 700720).